The chain runs to 575 residues: Physarolisin (575 aa).

The N-terminal stretch at 1 to 18 is a signal peptide; the sequence is MRLLSLLFLLGLATLSFA. A propeptide spans 19–173 (removed in mature form); it reads VRSQWAQQGR…SIKNARTQVG (155 aa). The region spanning 179-574 is the Peptidase S53 domain; the sequence is YIVPYVIFDL…SKLLAFVQTL (396 aa). An N-linked (GlcNAc...) asparagine glycan is attached at Asn-200. Residues Glu-248 and Asp-252 each act as charge relay system in the active site. Residues Asn-262, Asn-307, Asn-380, and Asn-453 are each glycosylated (N-linked (GlcNAc...) asparagine). Catalysis depends on Ser-484, which acts as the Charge relay system. Ca(2+)-binding residues include Asp-529, Ile-530, Gly-552, and Asp-554.

It depends on Ca(2+) as a cofactor. Autocatalytically processed. Post-translationally, N-glycosylated.

The catalysed reaction is Milk clotting activity. Preferential cleavage of 8-Gly-|-Ser-9 in B chain of insulin most rapidly, followed by 11-Leu-|-Val-12, 19-Cys(SO(3)H)-|-Gly and 24-Phe-|-Phe-25. No action on Ac-Phe-Tyr(I)2.. With respect to regulation, inhibited by diisopropylfluorophosphate (DFP) and diazoacetyl-D,L-norleucine methyl ester (DAN). The protein is Physarolisin of Physarum polycephalum (Slime mold).